The sequence spans 499 residues: Serine/threonine-protein phosphatase 5 (499 aa).

The interval 1–23 is disordered; sequence MAMAEGERTECAEPPRDEPPADG. An N-acetylalanine modification is found at A2. 3 TPR repeats span residues 28-61, 62-95, and 96-129; these read AEEL…NPSN, AIYY…DKKY, and IKGY…KPHD. The catalytic stretch occupies residues 184-499; sequence GKVTISFMKE…ANTLLQLGMM (316 aa). Mn(2+) contacts are provided by D242, H244, and D271. Residue H244 participates in substrate binding. Residues R275 and 303–304 contribute to the substrate site; that span reads NH. A Mn(2+)-binding site is contributed by N303. H304 serves as the catalytic Proton donor/acceptor. H352 serves as a coordination point for Mn(2+). Residues R400 and H427 each contribute to the substrate site. H427 contacts Mn(2+). Positions 495–499 are required for autoinhibition; that stretch reads QLGMM.

Belongs to the PPP phosphatase family. PP-5 (PP-T) subfamily. In terms of assembly, probably forms a complex composed of chaperones HSP90 and HSP70, co-chaperones STIP1/HOP, CDC37, PPP5C, PTGES3/p23, TSC1 and client protein TSC2. Probably forms a complex composed of chaperones HSP90 and HSP70, co-chaperones CDC37, PPP5C, TSC1 and client protein TSC2, CDK4, AKT, RAF1 and NR3C1; this complex does not contain co-chaperones STIP1/HOP and PTGES3/p23. Part of a complex with HSP90/HSP90AA1 and steroid receptors. Interacts (via TPR repeats) with HSP90AA1 (via TPR repeat-binding motif) or HSPA1A/HSPA1B; the interaction is direct and activates the phosphatase activity. Dissociates from HSPA1A/HSPA1B and HSP90AA1 in response to arachidonic acid. Interacts with CPNE1 (via VWFA domain). Interacts with CDC16, CDC27. Interacts with KLHDC10 (via the 6 Kelch repeats); inhibits the phosphatase activity on MAP3K5. Interacts with ATM and ATR; both interactions are induced by DNA damage and enhance ATM and ATR kinase activity. Interacts with RAD17; reduced by DNA damage. Interacts with nuclear receptors such as NR3C1/GCR and PPARG (activated by agonist); regulates their transactivation activities. Interacts (via TPR repeats) with S100 proteins S100A1, S100A2, S100A6, S100B and S100P; the interactions are calcium-dependent, strongly activate PPP5C phosphatase activity and compete with HSP90AA1 and MAP3K5 interactions. Interacts with SMAD2 and SMAD3 but not with SMAD1; decreases SMAD3 phosphorylation and protein levels. Interacts (via TPR repeats) with CRY1 and CRY2; the interaction with CRY2 down-regulates the phosphatase activity on CSNK1E. Interacts (via TPR repeats) with the active form of RAC1, GNA12 or GNA13; these interactions activate the phosphatase activity and translocate PPP5C to the cell membrane. Interacts with FLCN. Mg(2+) is required as a cofactor. The cofactor is Mn(2+). Activated by at least two different proteolytic cleavages producing a 56 kDa and a 50 kDa form. As to expression, ubiquitous.

It is found in the nucleus. The protein resides in the cytoplasm. Its subcellular location is the cell membrane. It carries out the reaction O-phospho-L-seryl-[protein] + H2O = L-seryl-[protein] + phosphate. The catalysed reaction is O-phospho-L-threonyl-[protein] + H2O = L-threonyl-[protein] + phosphate. Autoinhibited. In the autoinhibited state, the TPR domain interacts with the catalytic region and prevents substrate access to the catalytic pocket. Allosterically activated by various polyunsaturated fatty acids, free long-chain fatty-acids and long-chain fatty acyl-CoA esters, arachidonic acid being the most effective activator. HSP90A and probably RAC1, GNA12 and GNA13 can also release the autoinhibition by the TPR repeat. Activation by RAC1, GNA12 and GNA13 is synergistic with the one produced by fatty acids binding. Inhibited by okadaic acid. Functionally, serine/threonine-protein phosphatase that dephosphorylates a myriad of proteins involved in different signaling pathways including the kinases CSNK1E, ASK1/MAP3K5, PRKDC and RAF1, the nuclear receptors NR3C1, PPARG, ESR1 and ESR2, SMAD proteins and TAU/MAPT. Implicated in wide ranging cellular processes, including apoptosis, differentiation, DNA damage response, cell survival, regulation of ion channels or circadian rhythms, in response to steroid and thyroid hormones, calcium, fatty acids, TGF-beta as well as oxidative and genotoxic stresses. Participates in the control of DNA damage response mechanisms such as checkpoint activation and DNA damage repair through, for instance, the regulation ATM/ATR-signaling and dephosphorylation of PRKDC and TP53BP1. Inhibits ASK1/MAP3K5-mediated apoptosis induced by oxidative stress. Plays a positive role in adipogenesis, mainly through the dephosphorylation and activation of PPARG transactivation function. Also dephosphorylates and inhibits the anti-adipogenic effect of NR3C1. Regulates the circadian rhythms, through the dephosphorylation and activation of CSNK1E. May modulate TGF-beta signaling pathway by the regulation of SMAD3 phosphorylation and protein expression levels. Dephosphorylates and may play a role in the regulation of TAU/MAPT. Through their dephosphorylation, may play a role in the regulation of ions channels such as KCNH2. Dephosphorylate FNIP1, disrupting interaction with HSP90AA1/Hsp90. The polypeptide is Serine/threonine-protein phosphatase 5 (PPP5C) (Homo sapiens (Human)).